Reading from the N-terminus, the 103-residue chain is Co-chaperonin GroES (103 aa).

The protein belongs to the GroES chaperonin family. As to quaternary structure, heptamer of 7 subunits arranged in a ring. Interacts with the chaperonin GroEL.

It localises to the cytoplasm. Together with the chaperonin GroEL, plays an essential role in assisting protein folding. The GroEL-GroES system forms a nano-cage that allows encapsulation of the non-native substrate proteins and provides a physical environment optimized to promote and accelerate protein folding. GroES binds to the apical surface of the GroEL ring, thereby capping the opening of the GroEL channel. This chain is Co-chaperonin GroES, found in Synechococcus sp. (strain CC9311).